The sequence spans 430 residues: Adenylosuccinate synthetase (430 aa).

GTP-binding positions include 12-18 and 40-42; these read GDEGKGK and GHT. The active-site Proton acceptor is aspartate 13. Aspartate 13 and glycine 40 together coordinate Mg(2+). IMP contacts are provided by residues 13–16, 38–41, threonine 130, arginine 144, glutamine 224, threonine 239, and arginine 303; these read DEGK and NAGH. Histidine 41 (proton donor) is an active-site residue. 299-305 contacts substrate; it reads VNTGRKR. Residues arginine 305, 331–333, and 413–415 each bind GTP; these read KLD and STS.

It belongs to the adenylosuccinate synthetase family. Homodimer. Mg(2+) is required as a cofactor.

Its subcellular location is the cytoplasm. It catalyses the reaction IMP + L-aspartate + GTP = N(6)-(1,2-dicarboxyethyl)-AMP + GDP + phosphate + 2 H(+). It participates in purine metabolism; AMP biosynthesis via de novo pathway; AMP from IMP: step 1/2. Functionally, plays an important role in the de novo pathway of purine nucleotide biosynthesis. Catalyzes the first committed step in the biosynthesis of AMP from IMP. The protein is Adenylosuccinate synthetase of Rhodopseudomonas palustris (strain TIE-1).